Here is a 1050-residue protein sequence, read N- to C-terminus: Mitotic checkpoint serine/threonine-protein kinase BUB1 beta (1050 aa).

The BUB1 N-terminal domain occupies 62-226 (FEYEIRFYTG…FESSVPQRST (165 aa)). Positions 111 to 118 (GEKRYYSD) match the Nuclear localization signal motif. The tract at residues 152–185 (AQFYISWAEEYEARENFRKADAIFQEGIQQKAEP) is necessary for interaction with KNL1. The D-box signature appears at 224–232 (RSTLAELKS). Lys250 is subject to N6-acetyllysine; by PCAF. Position 367 is a phosphoserine (Ser367). The tract at residues 368-393 (TRKPGKEEGDPLQRVQSHQQASEEKK) is disordered. Ser435 bears the Phosphoserine mark. A disordered region spans residues 456–480 (IQTTQQERTGDQQEETMPTKETTKL). Residues Ser543, Ser665, and Ser670 each carry the phosphoserine modification. Residue Ser676 is modified to Phosphoserine; by PLK1. Phosphoserine is present on Ser697. The Protein kinase domain occupies 766-1050 (YCIKREYLIC…LTSPGALLFQ (285 aa)). An ATP-binding site is contributed by 772–780 (YLICEDYKL). The residue at position 792 (Thr792) is a Phosphothreonine; by PLK1. Lys795 provides a ligand contact to ATP. Asp882 (proton acceptor) is an active-site residue. Thr1008 carries the post-translational modification Phosphothreonine; by PLK1. Position 1042 is a phosphothreonine (Thr1042). At Ser1043 the chain carries Phosphoserine.

The protein belongs to the protein kinase superfamily. Ser/Thr protein kinase family. BUB1 subfamily. As to quaternary structure, interacts with CENPE. Interacts with PLK1. Part of a complex containing BUB3, CDC20 and BUB1B. Interacts with anaphase-promoting complex/cyclosome (APC/C). Interacts with KNL1. Interacts with KAT2B. Interacts with RIPK3. Interacts with the closed conformation form of MAD2L1. In terms of processing, proteolytically cleaved by caspase-3 in a cell cycle specific manner. The cleavage might be involved in the durability of the cell cycle delay. Caspase-3 cleavage is associated with abrogation of the mitotic checkpoint. The major site of cleavage is at Asp-610. Acetylation at Lys-250 regulates its degradation and timing in anaphase entry. Post-translationally, ubiquitinated. Degraded by the proteasome. Ubiquitinated by UBR5, promoting disassembly of the mitotic checkpoint complex from the APC/C complex. In terms of processing, sumoylated with SUMO2 and SUMO3. The sumoylation mediates the association with CENPE at the kinetochore. Autophosphorylated in vitro. Intramolecular autophosphorylation is stimulated by CENPE. Phosphorylated during mitosis and hyperphosphorylated in mitotically arrested cells. Phosphorylation at Ser-670 and Ser-1043 occurs at kinetochores upon mitotic entry with dephosphorylation at the onset of anaphase. As to expression, highly expressed in thymus followed by spleen. Preferentially expressed in tissues with a high mitotic index.

It localises to the cytoplasm. Its subcellular location is the nucleus. The protein localises to the chromosome. It is found in the centromere. The protein resides in the kinetochore. It localises to the cytoskeleton. Its subcellular location is the microtubule organizing center. The protein localises to the centrosome. The enzyme catalyses L-seryl-[protein] + ATP = O-phospho-L-seryl-[protein] + ADP + H(+). The catalysed reaction is L-threonyl-[protein] + ATP = O-phospho-L-threonyl-[protein] + ADP + H(+). Kinase activity stimulated by CENPE. Its function is as follows. Essential component of the mitotic checkpoint. Required for normal mitosis progression. The mitotic checkpoint delays anaphase until all chromosomes are properly attached to the mitotic spindle. One of its checkpoint functions is to inhibit the activity of the anaphase-promoting complex/cyclosome (APC/C) by blocking the binding of CDC20 to APC/C, independently of its kinase activity. The other is to monitor kinetochore activities that depend on the kinetochore motor CENPE. Required for kinetochore localization of CENPE. Negatively regulates PLK1 activity in interphase cells and suppresses centrosome amplification. Also implicated in triggering apoptosis in polyploid cells that exit aberrantly from mitotic arrest. May play a role for tumor suppression. The protein is Mitotic checkpoint serine/threonine-protein kinase BUB1 beta (BUB1B) of Homo sapiens (Human).